Here is a 420-residue protein sequence, read N- to C-terminus: Putative FBD-associated F-box protein At1g78730 (420 aa).

An F-box domain is found at 21–71; it reads LDWLRKLPDSLLCQVFLNLPTKDVVKTSVLSSTWGNIWRSVPGLDLGYGDF. Positions 341–390 constitute an FBD domain; the sequence is ISILPGPQCNLPALEFVDILKPMVEKETELKLMSYFLEKSTILKKLTLRL.

The polypeptide is Putative FBD-associated F-box protein At1g78730 (Arabidopsis thaliana (Mouse-ear cress)).